Here is a 436-residue protein sequence, read N- to C-terminus: Indole-3-acetyl-aspartic acid hydrolase (436 aa).

Belongs to the peptidase M20 family. Monomer.

It catalyses the reaction (indol-3-yl)acetyl-L-aspartate + H2O = (indol-3-yl)acetate + L-aspartate. In terms of biological role, hydrolyzes indole-3-acetyl-aspartate (IAA-Asp) to indole-3-acetic acid (IAA). Shows an exclusively high substrate specificity for IAA-Asp. The protein is Indole-3-acetyl-aspartic acid hydrolase of Enterobacter agglomerans (Erwinia herbicola).